Reading from the N-terminus, the 325-residue chain is Forkhead box protein B1 (325 aa).

A DNA-binding region (fork-head) is located at residues 12–103 (QKPPYSYISL…GDMFENGSFL (92 aa)). Residues 284-309 (LSNSPPSLSPTSSQTATSQSSPATPS) show a composition bias toward low complexity. Residues 284–325 (LSNSPPSLSPTSSQTATSQSSPATPSETLTSPASALHSVAVH) form a disordered region.

As to expression, expressed widespread in the early developing ventricular zone of the neural tube and later restricted to areas of the spinal cord, hindbrain, thalamus and hypothalamus. Expressed in epithelial cells of developing and adult mammary glands.

The protein resides in the nucleus. Its function is as follows. Transcription factor expressed by neural progenitor cells in specific regions of the embryonic neuroepithelium. Essential for the mammillary nuclei maintenance. Negatively regulates the proliferation of oligodendrocyte progenitors and promotes oligodendrocyte maturation. Also expressed in mammary glands, plays a role in lactation, controls development of mammary glands and the inferior colliculi of the midbrain in the central nervous system that regulates the milk-ejection reflex. The protein is Forkhead box protein B1 (Foxb1) of Mus musculus (Mouse).